The following is a 345-amino-acid chain: Probable 1-aminocyclopropane-1-carboxylate deaminase (345 aa).

Lys-58 bears the N6-(pyridoxal phosphate)lysine mark. Ser-85 acts as the Nucleophile in catalysis.

It belongs to the ACC deaminase/D-cysteine desulfhydrase family. Requires pyridoxal 5'-phosphate as cofactor.

The enzyme catalyses 1-aminocyclopropane-1-carboxylate + H2O = 2-oxobutanoate + NH4(+). Functionally, catalyzes a cyclopropane ring-opening reaction, the irreversible conversion of 1-aminocyclopropane-1-carboxylate (ACC) to ammonia and alpha-ketobutyrate. The sequence is that of Probable 1-aminocyclopropane-1-carboxylate deaminase from Cryptococcus neoformans var. neoformans serotype D (strain JEC21 / ATCC MYA-565) (Filobasidiella neoformans).